A 208-amino-acid chain; its full sequence is FMN-dependent NADH:quinone oxidoreductase (208 aa).

FMN contacts are provided by residues serine 10, 16–18 (SRS), and 96–99 (MYNF).

This sequence belongs to the azoreductase type 1 family. As to quaternary structure, homodimer. Requires FMN as cofactor.

The catalysed reaction is 2 a quinone + NADH + H(+) = 2 a 1,4-benzosemiquinone + NAD(+). It carries out the reaction N,N-dimethyl-1,4-phenylenediamine + anthranilate + 2 NAD(+) = 2-(4-dimethylaminophenyl)diazenylbenzoate + 2 NADH + 2 H(+). Its function is as follows. Quinone reductase that provides resistance to thiol-specific stress caused by electrophilic quinones. In terms of biological role, also exhibits azoreductase activity. Catalyzes the reductive cleavage of the azo bond in aromatic azo compounds to the corresponding amines. The chain is FMN-dependent NADH:quinone oxidoreductase from Xanthobacter autotrophicus (strain ATCC BAA-1158 / Py2).